Consider the following 471-residue polypeptide: UDP-N-acetylmuramoylalanine--D-glutamate ligase (471 aa).

Residue 123-129 coordinates ATP; sequence GTNGKST.

It belongs to the MurCDEF family.

It localises to the cytoplasm. The enzyme catalyses UDP-N-acetyl-alpha-D-muramoyl-L-alanine + D-glutamate + ATP = UDP-N-acetyl-alpha-D-muramoyl-L-alanyl-D-glutamate + ADP + phosphate + H(+). It participates in cell wall biogenesis; peptidoglycan biosynthesis. In terms of biological role, cell wall formation. Catalyzes the addition of glutamate to the nucleotide precursor UDP-N-acetylmuramoyl-L-alanine (UMA). The sequence is that of UDP-N-acetylmuramoylalanine--D-glutamate ligase from Caulobacter vibrioides (strain ATCC 19089 / CIP 103742 / CB 15) (Caulobacter crescentus).